Consider the following 268-residue polypeptide: MKFAVIGNPISHSLSPVMHRANFNSLGLDDTYEALNIPIEDFHLIKEIISKKELDGFNITIPHKERIIPYLDHVDEQAINAGAVNTVLIKDGKWIGYNTDGIGYVKGLHSVYPDLENAYILILGAGGASKGIAYELAKFVKPKLTVANRTMARFESWNLNINQISLADAEKYLAEFDIVINTTPAGMAGNNESIINLKHLSPNTLMSDIVYIPYKTPILEEAERKGNHIYNGLDMFVYQGAESFKIWTNKDADINSMKTAVLQQLKGE.

Shikimate-binding positions include 13–15 (SLS) and Thr-60. The active-site Proton acceptor is Lys-64. Glu-76 is an NADP(+) binding site. Shikimate contacts are provided by Asn-85 and Asp-100. NADP(+) contacts are provided by residues 124–128 (GAGGA), 148–153 (NRTMAR), and Ile-209. Position 211 (Tyr-211) interacts with shikimate. Gly-232 is a binding site for NADP(+).

This sequence belongs to the shikimate dehydrogenase family. As to quaternary structure, homodimer.

It carries out the reaction shikimate + NADP(+) = 3-dehydroshikimate + NADPH + H(+). It participates in metabolic intermediate biosynthesis; chorismate biosynthesis; chorismate from D-erythrose 4-phosphate and phosphoenolpyruvate: step 4/7. In terms of biological role, involved in the biosynthesis of the chorismate, which leads to the biosynthesis of aromatic amino acids. Catalyzes the reversible NADPH linked reduction of 3-dehydroshikimate (DHSA) to yield shikimate (SA). In Staphylococcus aureus (strain MRSA252), this protein is Shikimate dehydrogenase (NADP(+)).